A 435-amino-acid chain; its full sequence is Envelope glycoprotein M (435 aa).

At 1–36 (MGTQKKGPRSEKVSPYDTTTPEVEALDHQMDTLNWR) the chain is on the intravirion side. The chain crosses the membrane as a helical span at residues 37–57 (IWIIQVMMFTLGAVMLLATLI). Residues 58 to 111 (AASSEYTGIPCFYAAVVDYELFNATLDGGVWSGNRGGYSAPVLFLEPHSVVAFT) are Virion surface-facing. A helical membrane pass occupies residues 112–132 (YYTALTAMAMAVYTLITAAII). Residues 133 to 155 (HRETKNQRVRQSSGVAWLVVDPT) lie on the Intravirion side of the membrane. Residues 156–176 (TLFWGLLSLWLLNAVVLLLAY) traverse the membrane as a helical segment. The Virion surface portion of the chain corresponds to 177-178 (KQ). A helical membrane pass occupies residues 179 to 199 (IGVAATLYLGHFATSVIFTTY). Over 200–233 (FCGRGKLDETNIKAVANLRQQSVFLYRLAGPTRA) the chain is Intravirion. Residues 234 to 254 (VFVNLMAALMAICILFVSLML) traverse the membrane as a helical segment. Over 255 to 265 (ELVVANHLHTG) the chain is Virion surface. Residues 266–288 (LWSSVSVAMSTFSTLSVVYLIVS) form a helical membrane-spanning segment. Residues 289–294 (ELILAH) lie on the Intravirion side of the membrane. The helical transmembrane segment at 295–317 (YIHVLIGPSLGTLVACATLGTAA) threads the bilayer. Residues 318-334 (HSYMDRLYDPISVQSPR) lie on the Virion surface side of the membrane. A helical membrane pass occupies residues 335-355 (LIPTTRGTLACLAVFSVVMLL). At 356 to 435 (LRLMRAYVYH…LYERSNSGWE (80 aa)) the chain is on the intravirion side.

This sequence belongs to the herpesviridae glycoprotein M family. As to quaternary structure, interacts (via N-terminus) with gN (via N-terminus). The gM-gN heterodimer forms the gCII complex.

It localises to the virion membrane. The protein localises to the host Golgi apparatus. The protein resides in the host trans-Golgi network. Its subcellular location is the host endosome membrane. It is found in the host nucleus inner membrane. Functionally, envelope glycoprotein important for virion assembly and egress. Plays a role in the correct incorporation of gH-gL into virion membrane. Directs the glycoprotein N (gN) to the host trans-Golgi network. The protein is Envelope glycoprotein M of Homo sapiens (Human).